The chain runs to 238 residues: Uridylate kinase (238 aa).

Position 12–15 (12–15 (KLSG)) interacts with ATP. An involved in allosteric activation by GTP region spans residues 20–25 (GEKGFG). Gly-54 is a binding site for UMP. ATP is bound by residues Gly-55 and Arg-59. Residues Asp-72 and 133 to 140 (TGNPYFST) contribute to the UMP site. ATP-binding residues include Tyr-166 and Asp-169.

It belongs to the UMP kinase family. In terms of assembly, homohexamer.

The protein localises to the cytoplasm. The enzyme catalyses UMP + ATP = UDP + ADP. It functions in the pathway pyrimidine metabolism; CTP biosynthesis via de novo pathway; UDP from UMP (UMPK route): step 1/1. Allosterically activated by GTP. Inhibited by UTP. Functionally, catalyzes the reversible phosphorylation of UMP to UDP. This chain is Uridylate kinase, found in Clostridium botulinum (strain Langeland / NCTC 10281 / Type F).